Consider the following 435-residue polypeptide: MGDWSFLGRLLENAQEHSTVIGKVWLTVLFIFRILVLGAAAEDVWGDEQSDFTCNTQQPGCENVCYDRAFPISHIRFWALQIIFVSTPTLIYLGHVLHIVRMEEKKKEREEEEQLKRESPSPKEPPQDNPSSRDDRGRVRMAGALLRTYVFNIIFKTLFEVGFIAGQYFLYGFELKPLYRCDRWPCPNTVDCFISRPTEKTIFIIFMLAVACASLLLNMLEIYHLGWKKLKQGVTSRLGPDASEAPLGTADPPPLPPSSRPPAVAIGFPPYYAHTAAPLGQARAVGYPGAPPPAADFKLLALTEARGKGQSAKLYNGHHHLLMTEQNWANQAAERQPPALKAYPAASTPAAPSPVGSSSPPLAHEAEAGAAPLLLDGSGSSLEGSALAGTPEEEEQAVTTAAQMHQPPLPLGDPGRASKASRASSGRARPEDLAI.

An intramembrane segment occupies 2-15 (GDWSFLGRLLENAQ). At 16–19 (EHST) the chain is on the cytoplasmic side. A helical membrane pass occupies residues 20-40 (VIGKVWLTVLFIFRILVLGAA). Topologically, residues 41–71 (AEDVWGDEQSDFTCNTQQPGCENVCYDRAFP) are extracellular. Disulfide bonds link Cys54–Cys192, Cys61–Cys186, and Cys65–Cys181. Residues 72-92 (ISHIRFWALQIIFVSTPTLIY) form a helical membrane-spanning segment. Over 93-152 (LGHVLHIVRMEEKKKEREEEEQLKRESPSPKEPPQDNPSSRDDRGRVRMAGALLRTYVFN) the chain is Cytoplasmic. The segment covering 108 to 121 (EREEEEQLKRESPS) has biased composition (basic and acidic residues). The disordered stretch occupies residues 108–136 (EREEEEQLKRESPSPKEPPQDNPSSRDDR). A helical transmembrane segment spans residues 153–173 (IIFKTLFEVGFIAGQYFLYGF). Residues 174-201 (ELKPLYRCDRWPCPNTVDCFISRPTEKT) are Extracellular-facing. A helical transmembrane segment spans residues 202-222 (IFIIFMLAVACASLLLNMLEI). Residues 223–435 (YHLGWKKLKQ…GRARPEDLAI (213 aa)) lie on the Cytoplasmic side of the membrane. The interval 332–435 (AAERQPPALK…GRARPEDLAI (104 aa)) is disordered. 2 stretches are compositionally biased toward low complexity: residues 342-389 (AYPA…ALAG) and 415-427 (GRAS…SSGR).

It belongs to the connexin family. Alpha-type (group II) subfamily. In terms of assembly, a hemichannel or connexon is composed of a hexamer of connexins. A functional gap junction is formed by the apposition of two hemichannels. Forms heteromeric channels with GJA8.

It localises to the cell membrane. The protein resides in the cell junction. Its subcellular location is the gap junction. In terms of biological role, structural component of lens fiber gap junctions. Gap junctions are dodecameric channels that connect the cytoplasm of adjoining cells. They are formed by the docking of two hexameric hemichannels, one from each cell membrane. Small molecules and ions diffuse from one cell to a neighboring cell via the central pore. This Homo sapiens (Human) protein is Gap junction alpha-3 protein (GJA3).